A 280-amino-acid polypeptide reads, in one-letter code: Mediator of RNA polymerase II transcription subunit 2 (280 aa).

Residues 212-247 are disordered; it reads GLQNTSGGNEKKNDPQINFNDTNAPPSAVNVPENGN. Positions 226-236 are enriched in polar residues; it reads PQINFNDTNAP.

It belongs to the Mediator complex subunit 2 family. Component of the Mediator complex.

Its subcellular location is the nucleus. In terms of biological role, component of the Mediator complex, a coactivator involved in the regulated transcription of nearly all RNA polymerase II-dependent genes. Mediator functions as a bridge to convey information from gene-specific regulatory proteins to the basal RNA polymerase II transcription machinery. Mediator is recruited to promoters by direct interactions with regulatory proteins and serves as a scaffold for the assembly of a functional preinitiation complex with RNA polymerase II and the general transcription factors. This chain is Mediator of RNA polymerase II transcription subunit 2 (MED2), found in Kluyveromyces lactis (strain ATCC 8585 / CBS 2359 / DSM 70799 / NBRC 1267 / NRRL Y-1140 / WM37) (Yeast).